The following is a 255-amino-acid chain: 3-hydroxyacyl-CoA dehydrogenase type-2 (255 aa).

6 residues coordinate NAD(+): Ser-14, Leu-16, Asp-35, Asp-58, Val-59, and Cys-85. Ser-149 lines the substrate pocket. NAD(+)-binding residues include Tyr-162, Lys-166, Phe-195, and Thr-197. Catalysis depends on Tyr-162, which acts as the Proton acceptor.

Belongs to the short-chain dehydrogenases/reductases (SDR) family. As to quaternary structure, component of mitochondrial ribonuclease P, a complex composed of rswl/MRPP1, scu/MRPP2 and mldr/MRPP3. In terms of tissue distribution, found in many tissues including CNS, imaginal disks and salivary glands. Highest expression in both embryonic gonadal primordia and mature ovaries and testes.

It localises to the mitochondrion. The enzyme catalyses a (3S)-3-hydroxyacyl-CoA + NAD(+) = a 3-oxoacyl-CoA + NADH + H(+). It carries out the reaction (3S)-3-hydroxybutanoyl-CoA + NAD(+) = acetoacetyl-CoA + NADH + H(+). The catalysed reaction is testosterone + NAD(+) = androst-4-ene-3,17-dione + NADH + H(+). It catalyses the reaction 5alpha-androstane-3alpha,17beta-diol + NAD(+) = 17beta-hydroxy-5alpha-androstan-3-one + NADH + H(+). The enzyme catalyses 17beta-estradiol + NAD(+) = estrone + NADH + H(+). It carries out the reaction ursodeoxycholate + NAD(+) = 7-oxolithocholate + NADH + H(+). The catalysed reaction is 3beta,7beta-dihydroxy-5beta-cholan-24-oate + NAD(+) = 3beta-hydroxy-7-oxo-5beta-cholan-24-oate + NADH + H(+). It catalyses the reaction 11-dehydrocorticosterone + NAD(+) = pregn-4-ene-3,11,20,21-tetraone + NADH + H(+). The enzyme catalyses cortisone + NAD(+) = 17alpha-hydroxypregn-4-en-3,11,20-trione-21-al + NADH + H(+). It carries out the reaction cortisol + NAD(+) = 11beta,17alpha-dihydroxypregn-4-ene-3,20,21-trione + NADH + H(+). The catalysed reaction is 5alpha-pregnan-20beta-ol-3-one + NAD(+) = 5alpha-pregnane-3,20-dione + NADH + H(+). It catalyses the reaction 17beta-hydroxy-5alpha-androstan-3-one + NAD(+) = 5alpha-androstan-3,17-dione + NADH + H(+). Mitochondrial dehydrogenase involved in pathways of fatty acid, and steroid metabolism. Versatile enzyme presenting two types of activity; L-3-hydroxyacyl-CoA dehydrogenase ((3S)-3-hydroxyacyl-CoA dehydrogenase) activity and hydroxysteroid dehydrogenase (HSD) activity with a wide substrate spectrum. As a (3S)-3-hydroxyacyl-CoA dehydrogenase, it functions in the third step of the fatty acid beta-oxidation pathway, a major metabolic process in which fatty acids are oxidized to provide a significant source of energy, while also generating acyl-CoA metabolites used by many metabolic routes. As a HSD, it functions in the degradation pathways of glucocorticoids and sex steroids and epimerization of bile acids; catalyzes the beta-oxidation at position 17 of androgens and estrogens, has 3-alpha-hydroxysteroid dehydrogenase activity with androsterone, and carries out oxidative conversions of 7-beta-hydroxylated bile acids like ursodeoxycholate or isoursodeoxycholate (also known as 3-beta,7-beta-dihydroxy-5-beta-cholan-24-oate or 7-beta-hydroxyisolithocholate, respectively). Also exhibits 20-beta-OH and 21-OH dehydrogenase activities with C21 steroids. Essential for structural and functional integrity of mitochondria. Required for cell survival during embryonic development. May play a role in germline formation. Its function is as follows. In addition to mitochondrial dehydrogenase activity, moonlights as a component of mitochondrial ribonuclease P, a complex that cleaves tRNA molecules in their 5'-ends. Essential for the structural and functional integrity of mitochondria. Function is essential for pupal development. The protein is 3-hydroxyacyl-CoA dehydrogenase type-2 of Drosophila melanogaster (Fruit fly).